Here is a 90-residue protein sequence, read N- to C-terminus: Small ribosomal subunit protein uS15c (90 aa).

It belongs to the universal ribosomal protein uS15 family. In terms of assembly, part of the 30S ribosomal subunit.

The protein resides in the plastid. The protein localises to the chloroplast. This is Small ribosomal subunit protein uS15c (rps15) from Gossypium barbadense (Sea Island cotton).